Consider the following 642-residue polypeptide: Transmembrane 9 superfamily member 4 (642 aa).

Residues 1–23 (MATAMDWLPWSLLLFSLMCETSA) form the signal peptide. At 24–281 (FYVPGVAPIN…TMSDVQIHWF (258 aa)) the chain is on the extracellular side. Residues 282–302 (SIINSVVVVFFLSGILSMIII) form a helical membrane-spanning segment. At 303 to 346 (RTLRKDIANYNKEDDIEDTMEESGWKLVHGDVFRPPQYPMILSS) the chain is on the cytoplasmic side. The residue at position 312 (Tyr312) is a Phosphotyrosine. The helical transmembrane segment at 347–367 (LLGSGIQLFCMILIVIFVAML) threads the bilayer. Topologically, residues 368-376 (GMLSPSSRG) are extracellular. Residues 377 to 397 (ALMTTACFLFMFMGVFGGFSA) traverse the membrane as a helical segment. Residues 398 to 416 (GRLYRTLKGHRWKKGAFCT) lie on the Cytoplasmic side of the membrane. Residues 417–437 (ATLYPGVVFGICFVLNCFIWG) form a helical membrane-spanning segment. Topologically, residues 438 to 449 (KHSSGAVPFPTM) are extracellular. A helical transmembrane segment spans residues 450-470 (VALLCMWFGISLPLVYLGYYF). Topologically, residues 471–501 (GFRKQPYDNPVRTNQIPRQIPEQRWYMNRFV) are cytoplasmic. A helical transmembrane segment spans residues 502–522 (GILMAGILPFGAMFIELFFIF). Residues 523–535 (SAIWENQFYYLFG) are Extracellular-facing. Residues 536 to 556 (FLFLVFIILVVSCSQISIVMV) form a helical membrane-spanning segment. The Cytoplasmic segment spans residues 557–570 (YFQLCAEDYRWWWR). A helical membrane pass occupies residues 571-591 (NFLVSGGSAFYVLVYAIFYFV). The Extracellular segment spans residues 592-598 (NKLDIVE). The helical transmembrane segment at 599-619 (FIPSLLYFGYTALMVLSFWLL) threads the bilayer. Residues 620–642 (TGTIGFYAAYMFVRKIYAAVKID) are Cytoplasmic-facing.

This sequence belongs to the nonaspanin (TM9SF) (TC 9.A.2) family. Interacts with ATP6V1H in colon cancer cells. In terms of tissue distribution, highly expressed in metastatic melanoma cells whereas it is undetectable in primary melanoma cells, healthy skin tissues and peripheral blood lymphocytes. Expressed in CD34(+) hematopoietic progenitor cells and during monocyte and granulocyte differentiation. Overexpressed in acute myeloid leukemia, in particular in those displaying granulocytic differentiation (at protein level).

The protein resides in the membrane. It localises to the golgi apparatus. The protein localises to the early endosome. Associates with proteins harboring glycine-rich transmembrane domains and ensures their efficient localization to the cell surface. Regulates the assembly and activity of V-ATPase in colon cancer cells via its interaction with V-type proton ATPase subunit H (ATP6V1H) and contributes to V-ATPase-mediated pH alterations in cancer cells which play an important role in drug resistance and invasiveness of colon cancer cells. Plays an important role in an atypical phagocytic activity of metastatic melanoma cells called cannibalism and is involved in the pH regulation of the intracellular vesicles in tumor cells. The chain is Transmembrane 9 superfamily member 4 (TM9SF4) from Homo sapiens (Human).